A 302-amino-acid polypeptide reads, in one-letter code: MSEPQPGLEPPQHGLYMLFLLVLVFFLMGLVGFMICHVLKKKGYRCRTSRGSEPDDAQLQPPEDDDVNEDTVERIVRCIIQNEANAEALKEMLGDSEGEGTVQLSSVDATSSLQDGAPSHHHTVHLGSAAPCIHCSRSKRPPLVRQGRSKEGKGRPRPGETTVFSVGRFRVTHIEKRYGLHEHRDGSPTDRSWGSGGGQEPGVSQVAGGQPRTGTAAIERLLPEPPPSQAAATHPVQNGRLKDASLVPCTLEGTPGTSAELNVGTRGTGPSPGLPSQEANGQPTKLDTSGQQDSLPPEAGGM.

The helical transmembrane segment at 15-35 (LYMLFLLVLVFFLMGLVGFMI) threads the bilayer. Disordered stretches follow at residues 47-68 (RTSRGSEPDDAQLQPPEDDDVN), 135-164 (CSRSKRPPLVRQGRSKEGKGRPRPGETTVF), 177-212 (RYGLHEHRDGSPTDRSWGSGGGQEPGVSQVAGGQPR), and 247-302 (VPCT…AGGM). At Ser52 the chain carries Phosphoserine. Composition is skewed to basic and acidic residues over residues 148–158 (RSKEGKGRPRP) and 177–188 (RYGLHEHRDGSP). The segment covering 277 to 294 (QEANGQPTKLDTSGQQDS) has biased composition (polar residues).

The protein belongs to the RELT family. Interacts with RELT, RELL1, OXSR1, PLSCR1 and TRAF2.

It is found in the cell membrane. Functionally, induces activation of MAPK14/p38 cascade, when overexpressed. Induces apoptosis, when overexpressed. The chain is RELT-like protein 2 (Rell2) from Rattus norvegicus (Rat).